A 78-amino-acid polypeptide reads, in one-letter code: Large ribosomal subunit protein bL28 (78 aa).

Belongs to the bacterial ribosomal protein bL28 family.

The polypeptide is Large ribosomal subunit protein bL28 (Clavibacter michiganensis subsp. michiganensis (strain NCPPB 382)).